Consider the following 98-residue polypeptide: Keratin-associated protein 3-3 (98 aa).

3 repeat units span residues 3–7, 47–51, and 89–93. Residues 3–59 form a 3 X 5 AA repeats of C-C-X(3) region; sequence CCASRGCSVPTGPATTICSSDKSCRCGVCLPSTCPHTVWLLEPTCCDNCPPPCHIPQ.

The protein belongs to the KRTAP type 3 family. As to quaternary structure, interacts with hair keratins. As to expression, localized to the upper cortex of the hair shaft.

In terms of biological role, in the hair cortex, hair keratin intermediate filaments are embedded in an interfilamentous matrix, consisting of hair keratin-associated proteins (KRTAP), which are essential for the formation of a rigid and resistant hair shaft through their extensive disulfide bond cross-linking with abundant cysteine residues of hair keratins. The matrix proteins include the high-sulfur and high-glycine-tyrosine keratins. The polypeptide is Keratin-associated protein 3-3 (KRTAP3-3) (Homo sapiens (Human)).